A 285-amino-acid polypeptide reads, in one-letter code: tRNA pseudouridine synthase B (285 aa).

Asp-40 functions as the Nucleophile in the catalytic mechanism.

It belongs to the pseudouridine synthase TruB family. Type 1 subfamily.

It catalyses the reaction uridine(55) in tRNA = pseudouridine(55) in tRNA. Responsible for synthesis of pseudouridine from uracil-55 in the psi GC loop of transfer RNAs. This chain is tRNA pseudouridine synthase B, found in Caldanaerobacter subterraneus subsp. tengcongensis (strain DSM 15242 / JCM 11007 / NBRC 100824 / MB4) (Thermoanaerobacter tengcongensis).